Here is a 296-residue protein sequence, read N- to C-terminus: Trimeric intracellular cation channel type A (296 aa).

Over 1-19 (MELPGALQLGELAAAFASV) the chain is Lumenal. A helical transmembrane segment spans residues 20 to 37 (PVFPLFDAAYFIVSVLYL). Residues 38 to 51 (KYEPGAVEMSRKSP) are Cytoplasmic-facing. The chain crosses the membrane as a helical span at residues 52–73 (FASWLCAMLHCFGSYILADLLL). Residue G74 participates in Ca(2+) binding. The Lumenal segment spans residues 74 to 85 (GESPIHYFSNNS). Residues 86–103 (SVILATAVWYLIFFCPMN) form a helical membrane-spanning segment. Residues 104-107 (LFYK) lie on the Cytoplasmic side of the membrane. A helical transmembrane segment spans residues 108–126 (CVSFLPVKLIFVAMKEVVR). A 1,2-diacyl-sn-glycero-3-phospho-(1D-myo-inositol-4,5-bisphosphate) is bound by residues K122 and R126. Residues 127-144 (VRKIAAGVHHAHHQYHHG) are Lumenal-facing. The chain crosses the membrane as a helical span at residues 145 to 162 (WFIMMATGWVKGSGVALM). At 163–183 (SNFEQLLRGVWRPETNEILHM) the chain is on the cytoplasmic side. Residues 184–201 (SFPTKASLYGTVLFTLQQ) form a helical membrane-spanning segment. Residues 202–209 (THWLPVSE) lie on the Lumenal side of the membrane. A helical transmembrane segment spans residues 210 to 230 (ANLVFFFTMFMIVCKVFMTAT). At 231–273 (HSHASPFAPVEGFICPVFFGSVSSGHTSHHNQHGHSHEASYQP) the chain is on the cytoplasmic side. A disordered region spans residues 256–296 (HTSHHNQHGHSHEASYQPPPPVKSKEELNEGTRKRKAKKAE). Residues 278 to 287 (KSKEELNEGT) show a composition bias toward basic and acidic residues.

The protein belongs to the TMEM38 family. As to quaternary structure, homotrimer; conformation seems to be controled by binding to diacylglycerol (DAG).

It is found in the sarcoplasmic reticulum membrane. It localises to the nucleus membrane. It catalyses the reaction K(+)(in) = K(+)(out). With respect to regulation, channel activity is activated by a change of voltage within the sarcoplasmic reticulum lumen and blocked by luminal high Ca(2+) levels. Its function is as follows. Intracellular monovalent cation channel required for maintenance of rapid intracellular calcium release. Acts as a potassium counter-ion channel that functions in synchronization with calcium release from intracellular stores. Opened by a change of voltage within the sarcoplasmic reticulum lumen. The protein is Trimeric intracellular cation channel type A (TMEM38A) of Gallus gallus (Chicken).